An 85-amino-acid chain; its full sequence is Small ribosomal subunit protein uS17 (85 aa).

Belongs to the universal ribosomal protein uS17 family. In terms of assembly, part of the 30S ribosomal subunit.

Functionally, one of the primary rRNA binding proteins, it binds specifically to the 5'-end of 16S ribosomal RNA. This is Small ribosomal subunit protein uS17 from Actinobacillus succinogenes (strain ATCC 55618 / DSM 22257 / CCUG 43843 / 130Z).